A 333-amino-acid chain; its full sequence is Fe(3+)-citrate import system permease protein YfmD (333 aa).

9 helical membrane passes run 13-33 (LMMF…NLSV), 67-87 (TLIG…MQAM), 97-117 (IFGV…ILPA), 121-141 (SSVI…YMIA), 151-171 (LALS…AIII), 201-221 (FSVI…VLGL), 238-258 (ILIS…AGPI), 279-299 (YVLP…DVLA), and 302-322 (IAFP…TPFF).

This sequence belongs to the binding-protein-dependent transport system permease family. FecCD subfamily. In terms of assembly, the complex is composed of one ATP-binding protein (YfmF), two transmembrane proteins (YfmD and YfmE) and a solute-binding protein (YfmC).

It localises to the cell membrane. In terms of biological role, part of the ABC transporter complex YfmCDEF involved in citrate-dependent Fe(3+) import. Involved in the translocation of the substrate across the membrane. This is Fe(3+)-citrate import system permease protein YfmD (yfmD) from Bacillus subtilis (strain 168).